The following is a 293-amino-acid chain: Large ribosomal subunit protein uL18 (293 aa).

Residues 249–273 (DASPAAKKAAKPSKRHTAKRLTYDE) form a disordered region. The segment covering 256 to 267 (KAAKPSKRHTAK) has biased composition (basic residues).

The protein belongs to the universal ribosomal protein uL18 family. As to quaternary structure, component of the large ribosomal subunit (LSU).

Its subcellular location is the cytoplasm. The protein localises to the nucleus. Functionally, component of the ribosome, a large ribonucleoprotein complex responsible for the synthesis of proteins in the cell. The small ribosomal subunit (SSU) binds messenger RNAs (mRNAs) and translates the encoded message by selecting cognate aminoacyl-transfer RNA (tRNA) molecules. The large subunit (LSU) contains the ribosomal catalytic site termed the peptidyl transferase center (PTC), which catalyzes the formation of peptide bonds, thereby polymerizing the amino acids delivered by tRNAs into a polypeptide chain. The nascent polypeptides leave the ribosome through a tunnel in the LSU and interact with protein factors that function in enzymatic processing, targeting, and the membrane insertion of nascent chains at the exit of the ribosomal tunnel. The protein is Large ribosomal subunit protein uL18 (rpl-5) of Caenorhabditis elegans.